Consider the following 810-residue polypeptide: Transitional endoplasmic reticulum ATPase homolog 2 (810 aa).

Residues 252–258, asparagine 353, histidine 389, and 526–531 contribute to the ATP site; these read PGTGKTL and GCGKTL. Residues 713 to 727 show a composition bias toward basic and acidic residues; the sequence is RQEKERQDRSARGEE. 2 disordered regions span residues 713–732 and 777–810; these read RQEKERQDRSARGEELMEDE and FGNNFKFPGEAPSAGQPVGGNGGSGGNDDDDLYN. Residues 793–802 are compositionally biased toward gly residues; it reads PVGGNGGSGG. An interaction with ufd-2 region spans residues 805–810; that stretch reads DDDLYN.

This sequence belongs to the AAA ATPase family. CDC48 subfamily. In terms of assembly, homohexamer; oligomerization is ATP-independent. Forms a ring-shaped particle of 18.3 nm diameter, that displays 6-fold radial symmetry. Interacts with cdc-48.1 and thus may form heterohexamers. Forms a complex composed of ubxn-3, cdc-48.1 and/or cdc-48.2 and substrate cdt-1. Interacts (via N-terminus) with ubxn-3. Interacts (via N-terminus) with atx-3 (via RRDR motif). Interacts (via N-terminus) with ubxn-5. Interacts with ufd-1. Interacts (via DDDLYN motif) with ufd-2. Interacts (via N-terminus) with ubxn-1. Interacts (via N-terminus) with ubxn-2. Interacts (via N-terminus) with ubxn-4. Interacts with ubxn-6. In terms of tissue distribution, expressed in body wall muscles.

It localises to the cytoplasm. It catalyses the reaction ATP + H2O = ADP + phosphate + H(+). The first ATP-binding region has low ATPase activity. The second ATP-binding region is responsible for ATPase activity. ATP binding to the first ATP-binding region induces intrinsic activity of the second ATP-binding region. While ATP binding to the first ATP-binding region appears to prevent ATP hydrolysis by the second ATP-binding region, ADP-binding to first region promotes the coordinate and cooperative ATPase cycle of the second ATP-binding region. ATP binding to the first ATP-binding region induces a conformational change, promoting the rotation of the first ATP-binding region relative to the second ATP-binding region in the hexamer. Inhibited by N-ethylmaleimide (NEM). In terms of biological role, ATP-dependent chaperone which probably uses the energy provided by ATP hydrolysis to generate mechanical force to unfold substrate proteins, disassemble protein complexes, and disaggregate protein aggregates. However, able to prevent aggregation of unfolded proteins also in an ATP-independent manner. Targets polyubiquitinated proteins for proteasomal degradation by binding to 'Lys-48'-linked polyubiquitin chains. Involved in the cytoplasmic elimination of misfolded proteins exported from the ER. This pathway, known as ERAD, prevents the activation of the unfolded protein response (UPR) caused by the accumulation of misfolded proteins in the ER. Together with udf-2 and chn-1, regulates myosin assembly in body wall muscles by targeting myosin chaperone unc-45 for proteasomal degradation. During oocyte meiosis and together with cdc-48.1, required for chromosome condensation at the diakinesis phase in prophase I and for progression of metaphase I. During the first embryonic cell division, regulates DNA replication and thus chromosome segregation and decondensation, and nuclear envelope re-assembly. In S phase and in association with ufd-1, npl-4.1 and/or npl-4.2 and ubxn-3, ensures the degradation of DNA licensing factor cdt-1 after the initiation of DNA replication and thus the disassembly of the DNA replication CMG helicase complex by promoting the dissociation from chromatin of several of its components including cdc-45 and sld-5. Regulates ubxn-3 nuclear localization during S phase. During the first embryonic cell divisions and together with cdc-48.1, regulates the re-assembly of the nuclear envelope after mitosis possibly by inactivating kinase air-2, a component of the chromosomal passenger complex (CPC). The sequence is that of Transitional endoplasmic reticulum ATPase homolog 2 (cdc-48.2) from Caenorhabditis elegans.